An 83-amino-acid polypeptide reads, in one-letter code: MKLTCVMIVAVLFLTTWTFVTADDSRYGLKNLFPKARHEMKNPEASKLNKRDECYPPGTFCGIKPGLCCSAICLSFVCISFDF.

The first 22 residues, 1-22 (MKLTCVMIVAVLFLTTWTFVTA), serve as a signal peptide directing secretion. A propeptide spanning residues 23-49 (DDSRYGLKNLFPKARHEMKNPEASKLN) is cleaved from the precursor. Cystine bridges form between Cys-54–Cys-69, Cys-61–Cys-73, and Cys-68–Cys-78. 2 positions are modified to 4-hydroxyproline: Pro-56 and Pro-65.

This sequence belongs to the conotoxin O1 superfamily. Expressed by the venom duct.

It localises to the secreted. Functionally, delta-conotoxins bind to site 6 of voltage-gated sodium channels (Nav) and inhibit the inactivation process. The sequence is that of Delta-conotoxin-like MVIC from Conus magus (Magical cone).